Consider the following 441-residue polypeptide: Protein disulfide isomerase-like 2-3 (441 aa).

A signal peptide spans 1-18 (MRPAVAAALLLVAAAVAA). 2 consecutive Thioredoxin domains span residues 19–139 (SPVS…ALLR) and 159–276 (SEKT…ANAA). Residues Cys59 and Cys62 each act as nucleophile in the active site. A disulfide bridge connects residues Cys59 and Cys62. The disordered stretch occupies residues 143-166 (NGKTSAGSGGKKSGGSSEKTEPSA). Residues Cys195 and Cys198 each act as nucleophile in the active site. Cys195 and Cys198 form a disulfide bridge.

It belongs to the protein disulfide isomerase family.

The protein localises to the endoplasmic reticulum lumen. The enzyme catalyses Catalyzes the rearrangement of -S-S- bonds in proteins.. Functionally, acts as a protein-folding catalyst that interacts with nascent polypeptides to catalyze the formation, isomerization, and reduction or oxidation of disulfide bonds. May play a role in storage protein biogenesis. This chain is Protein disulfide isomerase-like 2-3 (PDIL2-3), found in Oryza sativa subsp. japonica (Rice).